A 419-amino-acid polypeptide reads, in one-letter code: Multiple organellar RNA editing factor 1, mitochondrial (419 aa).

Residues 1-60 (MAMISHRLRRALLTATSYVNRSISSSITPASDFPSVSAAVLKRSVIGRSTEVATRAPARL) constitute a mitochondrion transit peptide. A disordered region spans residues 174 to 401 (KEYGGDKYEN…AGQPGSDQVR (228 aa)). Residues 237 to 252 (GPQQGYATPGQGQGTQ) are compositionally biased toward low complexity. Positions 310–327 (GQGGSGNYSQGPQGGYNQ) are enriched in gly residues. Residues 342–356 (GPASGAGNLGPAPGA) are compositionally biased toward low complexity. A compositionally biased stretch (gly residues) spans 357–367 (GNPGYGQGYSG). Residues 371-401 (EQNQTFPQADQRNRDWNNNNPAGQPGSDQVR) are compositionally biased toward polar residues.

This sequence belongs to the MORF family. As to quaternary structure, homodimer and heterodimer with MORF3. Heterodimers with MORF8/RIP1, MORF4/RIP4 and MORF6/RIP6. Interacts with PCMP-E90/MEF13. Interacts with PCMP-H13/MEF35.

It is found in the mitochondrion. Its function is as follows. Involved in organellar RNA editing. Required for the processing of numerous RNA editing sites in mitochondria. Binds to the mitochondrial MEF19 and MEF21 factors, two pentatricopeptide repeat-containing proteins involved in RNA editing. This is Multiple organellar RNA editing factor 1, mitochondrial from Arabidopsis thaliana (Mouse-ear cress).